The following is a 317-amino-acid chain: Melanocyte-stimulating hormone receptor (317 aa).

Residues 1-37 (MPALGSQRRLLGSLNCTPPATLPFTLAPNRTGPQCLE) are Extracellular-facing. The N-linked (GlcNAc...) asparagine glycan is linked to Asn29. The helical transmembrane segment at 38–63 (VSIPDGLFLSLGLVSLVENVLVVAAI) threads the bilayer. At 64 to 72 (AKNRNLHSP) the chain is on the cytoplasmic side. Residues 73–93 (MYYFICCLAVSDLLVSVSNVL) form a helical membrane-spanning segment. Residues 94–118 (ETAVMLLLEAGVLATQAAVVQQLDN) lie on the Extracellular side of the membrane. The chain crosses the membrane as a helical span at residues 119 to 140 (VIDVLICGSMVSSLCFLGAIAV). Over 141–163 (DRYISIFYALRYHSVVTLPRAWR) the chain is Cytoplasmic. The chain crosses the membrane as a helical span at residues 164–183 (IIAAIWVASILTSLLFITYY). Residues 184–191 (NHKVILLC) lie on the Extracellular side of the membrane. The helical transmembrane segment at 192-211 (LVGLFIAMLALMAVLYVHML) threads the bilayer. Residues 212 to 240 (ARACQHARGIARLQKRQRPIHQGFGLKGA) lie on the Cytoplasmic side of the membrane. The chain crosses the membrane as a helical span at residues 241–266 (ATLTILLGVFFLCWGPFFLHLSLIVL). Residues 267–279 (CPQHPTCGCIFKN) lie on the Extracellular side of the membrane. Residues 280–300 (FNLFLALIICNAIVDPLIYAF) form a helical membrane-spanning segment. The Cytoplasmic segment spans residues 301–317 (RSQELRKTLQEVLQCSW). Cys315 carries S-palmitoyl cysteine lipidation.

This sequence belongs to the G-protein coupled receptor 1 family. As to quaternary structure, interacts with MGRN1, but does not undergo MGRN1-mediated ubiquitination; this interaction competes with GNAS-binding and thus inhibits agonist-induced cAMP production. Interacts with OPN3; the interaction results in a decrease in MC1R-mediated cAMP signaling and ultimately a decrease in melanin production in melanocytes. As to expression, highly expressed in the testis.

Its subcellular location is the cell membrane. Receptor for MSH (alpha, beta) and ACTH. Does not seem to be active with gamma-MSH. The activity of this receptor is mediated by G proteins which activate adenylate cyclase. Mediates melanogenesis, the production of eumelanin (black/brown) and phaeomelanin (red/yellow), via regulation of cAMP signaling in melanocytes. The polypeptide is Melanocyte-stimulating hormone receptor (MC1R) (Bos taurus (Bovine)).